A 641-amino-acid chain; its full sequence is Phosphomethylpyrimidine synthase (641 aa).

Substrate is bound by residues N221, M250, Y279, H315, 335-337 (SRG), 376-379 (DGLR), and E415. H419 is a binding site for Zn(2+). Position 442 (Y442) interacts with substrate. Residue H483 participates in Zn(2+) binding. [4Fe-4S] cluster-binding residues include C563, C566, and C571.

It belongs to the ThiC family. Homodimer. Requires [4Fe-4S] cluster as cofactor.

It catalyses the reaction 5-amino-1-(5-phospho-beta-D-ribosyl)imidazole + S-adenosyl-L-methionine = 4-amino-2-methyl-5-(phosphooxymethyl)pyrimidine + CO + 5'-deoxyadenosine + formate + L-methionine + 3 H(+). It functions in the pathway cofactor biosynthesis; thiamine diphosphate biosynthesis. In terms of biological role, catalyzes the synthesis of the hydroxymethylpyrimidine phosphate (HMP-P) moiety of thiamine from aminoimidazole ribotide (AIR) in a radical S-adenosyl-L-methionine (SAM)-dependent reaction. This Rhodopseudomonas palustris (strain TIE-1) protein is Phosphomethylpyrimidine synthase.